The following is a 223-amino-acid chain: Regulator of G-protein signaling 19 (223 aa).

A disordered region spans residues Met1–Pro30. A compositionally biased stretch (low complexity) spans Pro20–Ala29. 2 positions are modified to phosphoserine: Ser24 and Ser103. An RGS domain is found at Ser96 to Leu212. Ser157 carries the post-translational modification Phosphoserine; by MAPK1 and MAPK3. Positions Leu213–Ala223 are interaction with GIPC.

In terms of assembly, interacts with GIPC PDZ domain. Interacts with GNAO1. Fatty acylated. Heavily palmitoylated in the cysteine string motif. Post-translationally, phosphorylated, mainly on serine residues.

The protein resides in the membrane. In terms of biological role, inhibits signal transduction by increasing the GTPase activity of G protein alpha subunits thereby driving them into their inactive GDP-bound form. Binds to G-alpha subfamily 1 members, with the order G(i)a3 &gt; G(i)a1 &gt; G(o)a &gt;&gt; G(z)a/G(i)a2. Activity on G(z)-alpha is inhibited by phosphorylation and palmitoylation of the G-protein. The chain is Regulator of G-protein signaling 19 (RGS19) from Bos taurus (Bovine).